A 246-amino-acid chain; its full sequence is tRNA (guanine-N(1)-)-methyltransferase (246 aa).

Residues G113 and 132 to 137 (LGDFVV) each bind S-adenosyl-L-methionine.

The protein belongs to the RNA methyltransferase TrmD family. As to quaternary structure, homodimer.

The protein localises to the cytoplasm. The enzyme catalyses guanosine(37) in tRNA + S-adenosyl-L-methionine = N(1)-methylguanosine(37) in tRNA + S-adenosyl-L-homocysteine + H(+). Functionally, specifically methylates guanosine-37 in various tRNAs. The sequence is that of tRNA (guanine-N(1)-)-methyltransferase from Latilactobacillus sakei subsp. sakei (strain 23K) (Lactobacillus sakei subsp. sakei).